A 430-amino-acid chain; its full sequence is PCI domain-containing protein 2 homolog (430 aa).

One can recognise a PCI domain in the interval 243–424 (ITYRFFNGRL…ALVVSPTNPF (182 aa)).

The protein belongs to the CSN12 family.

The chain is PCI domain-containing protein 2 homolog (pcid2) from Dictyostelium discoideum (Social amoeba).